The primary structure comprises 324 residues: uncharacterized protein (324 aa).

The protein belongs to the mgp1/MG371 family.

This is an uncharacterized protein from Mycoplasma genitalium (strain ATCC 33530 / DSM 19775 / NCTC 10195 / G37) (Mycoplasmoides genitalium).